A 145-amino-acid polypeptide reads, in one-letter code: 3-dehydroquinate dehydratase 2 (145 aa).

Residue Tyr-22 is the Proton acceptor of the active site. Substrate-binding residues include Asn-73, His-79, and Asp-86. Residue His-101 is the Proton donor of the active site. Residues 102–103 (IS) and Arg-112 each bind substrate.

Belongs to the type-II 3-dehydroquinase family. Homododecamer.

The catalysed reaction is 3-dehydroquinate = 3-dehydroshikimate + H2O. It participates in metabolic intermediate biosynthesis; chorismate biosynthesis; chorismate from D-erythrose 4-phosphate and phosphoenolpyruvate: step 3/7. Its function is as follows. Catalyzes a trans-dehydration via an enolate intermediate. In Corynebacterium efficiens (strain DSM 44549 / YS-314 / AJ 12310 / JCM 11189 / NBRC 100395), this protein is 3-dehydroquinate dehydratase 2 (aroQ2).